A 322-amino-acid polypeptide reads, in one-letter code: Glycerate dehydrogenase (322 aa).

NAD(+) contacts are provided by residues 158-159 (SI), aspartate 178, 239-241 (TAR), and aspartate 265. Residue arginine 241 is part of the active site. The active site involves glutamate 270. The active-site Proton donor is the histidine 288. Residue 288 to 291 (HIGS) participates in NAD(+) binding.

Belongs to the D-isomer specific 2-hydroxyacid dehydrogenase family. Homodimer.

It catalyses the reaction (R)-glycerate + NAD(+) = 3-hydroxypyruvate + NADH + H(+). Its pathway is one-carbon metabolism; formaldehyde assimilation via serine pathway. Functionally, active on hydroxypyruvate and glyoxylate. This Hyphomicrobium methylovorum protein is Glycerate dehydrogenase.